The sequence spans 117 residues: Succinate dehydrogenase hydrophobic membrane anchor subunit (117 aa).

Residues 1–15 (MVEMESAKSVLEPLA) are Cytoplasmic-facing. A helical membrane pass occupies residues 16 to 36 (WLMQMITGLLMILLVTAHFYV). Residues 37–61 (THMTTHDALRYAEVVERVAQPEFKA) lie on the Extracellular side of the membrane. Residues 62-82 (LYALLLLAVSFHAFNGLRAIL) traverse the membrane as a helical segment. Position 73 (histidine 73) interacts with heme. Over 83–92 (LDTNAGMRKK) the chain is Cytoplasmic. Residues 93 to 115 (GAVSALTTLAFLLAFFYGLYLLF) traverse the membrane as a helical segment.

Part of an enzyme complex containing four subunits: a flavoprotein, an iron-sulfur protein, plus two membrane-anchoring proteins, SdhC and SdhD. It depends on heme as a cofactor.

The protein resides in the cell membrane. It participates in carbohydrate metabolism; tricarboxylic acid cycle. In terms of biological role, membrane-anchoring subunit of succinate dehydrogenase (SDH). The sequence is that of Succinate dehydrogenase hydrophobic membrane anchor subunit (sdhD) from Archaeoglobus fulgidus (strain ATCC 49558 / DSM 4304 / JCM 9628 / NBRC 100126 / VC-16).